The following is a 726-amino-acid chain: AP-1 complex subunit beta-1 (726 aa).

Belongs to the adaptor complexes large subunit family. As to quaternary structure, adaptor protein complex 1 (AP-1) is a heterotetramer composed of two large adaptins (gamma-type subunit APL4 and beta-type subunit APL2), a medium adaptin (mu-type subunit APM1) and a small adaptin (sigma-type subunit APS1). Interacts with CHC1. Interacts with APM2, probably forming an alternative AP-1-like complex.

The protein resides in the cell membrane. The protein localises to the membrane. Its subcellular location is the coated pit. Its function is as follows. Adaptins are components of the adaptor complexes which link clathrin to receptors in coated vesicles. Clathrin-associated protein complexes are believed to interact with the cytoplasmic tails of membrane proteins, leading to their selection and concentration. The AP-1 complex interacts directly with clathrin. The protein is AP-1 complex subunit beta-1 (APL2) of Saccharomyces cerevisiae (strain ATCC 204508 / S288c) (Baker's yeast).